The following is a 392-amino-acid chain: Probable tRNA sulfurtransferase (392 aa).

A THUMP domain is found at 59 to 167 (ADITDRVKKV…DQAFVFSNKI (109 aa)). ATP-binding positions include 184-185 (LL), 209-210 (HF), arginine 266, glycine 288, and glutamine 297.

Belongs to the ThiI family.

The protein resides in the cytoplasm. It catalyses the reaction [ThiI sulfur-carrier protein]-S-sulfanyl-L-cysteine + a uridine in tRNA + 2 reduced [2Fe-2S]-[ferredoxin] + ATP + H(+) = [ThiI sulfur-carrier protein]-L-cysteine + a 4-thiouridine in tRNA + 2 oxidized [2Fe-2S]-[ferredoxin] + AMP + diphosphate. The catalysed reaction is [ThiS sulfur-carrier protein]-C-terminal Gly-Gly-AMP + S-sulfanyl-L-cysteinyl-[cysteine desulfurase] + AH2 = [ThiS sulfur-carrier protein]-C-terminal-Gly-aminoethanethioate + L-cysteinyl-[cysteine desulfurase] + A + AMP + 2 H(+). It participates in cofactor biosynthesis; thiamine diphosphate biosynthesis. Catalyzes the ATP-dependent transfer of a sulfur to tRNA to produce 4-thiouridine in position 8 of tRNAs, which functions as a near-UV photosensor. Also catalyzes the transfer of sulfur to the sulfur carrier protein ThiS, forming ThiS-thiocarboxylate. This is a step in the synthesis of thiazole, in the thiamine biosynthesis pathway. The sulfur is donated as persulfide by IscS. The protein is Probable tRNA sulfurtransferase of Alkaliphilus oremlandii (strain OhILAs) (Clostridium oremlandii (strain OhILAs)).